A 424-amino-acid chain; its full sequence is Tubulin-specific chaperone cofactor E-like protein (424 aa).

A phosphoserine mark is found at Ser18 and Ser41. 7 LRR repeats span residues Cys73–Asn98, Val99–Gly123, Ser124–Leu147, Leu150–Cys172, Cys173–Val197, Phe199–Arg224, and Phe226–Ser250. The LRRCT domain occupies Ile262–Phe303. Residues Ala334–Lys424 form the Ubiquitin-like domain. The stretch at Phe350 to Leu375 forms a coiled coil.

It is found in the cytoplasm. The protein localises to the cytoskeleton. Acts as a regulator of tubulin stability. The chain is Tubulin-specific chaperone cofactor E-like protein (Tbcel) from Rattus norvegicus (Rat).